We begin with the raw amino-acid sequence, 228 residues long: Cytochrome c oxidase subunit 2 (228 aa).

Over 1–14 (MAYPLQLGFQDATS) the chain is Mitochondrial intermembrane. Residues 15 to 45 (PVMEELLHFHDHTLMIIFLISSLVLYIIMLM) form a helical membrane-spanning segment. Residues 46-59 (LTSKLVHTNMMNVQ) lie on the Mitochondrial matrix side of the membrane. The helical transmembrane segment at 60–87 (EMEMIWTILPAIILILIALPSLHTLYMM) threads the bilayer. Residues 88–228 (DEINNPLLTI…FENWSASLAQ (141 aa)) lie on the Mitochondrial intermembrane side of the membrane. Positions 161, 196, 198, 200, 204, and 207 each coordinate Cu cation. E198 is a Mg(2+) binding site. Phosphotyrosine is present on Y218.

This sequence belongs to the cytochrome c oxidase subunit 2 family. Component of the cytochrome c oxidase (complex IV, CIV), a multisubunit enzyme composed of 14 subunits. The complex is composed of a catalytic core of 3 subunits MT-CO1, MT-CO2 and MT-CO3, encoded in the mitochondrial DNA, and 11 supernumerary subunits COX4I, COX5A, COX5B, COX6A, COX6B, COX6C, COX7A, COX7B, COX7C, COX8 and NDUFA4, which are encoded in the nuclear genome. The complex exists as a monomer or a dimer and forms supercomplexes (SCs) in the inner mitochondrial membrane with NADH-ubiquinone oxidoreductase (complex I, CI) and ubiquinol-cytochrome c oxidoreductase (cytochrome b-c1 complex, complex III, CIII), resulting in different assemblies (supercomplex SCI(1)III(2)IV(1) and megacomplex MCI(2)III(2)IV(2)). Found in a complex with TMEM177, COA6, COX18, COX20, SCO1 and SCO2. Interacts with TMEM177 in a COX20-dependent manner. Interacts with COX20. Interacts with COX16. Cu cation serves as cofactor.

The protein localises to the mitochondrion inner membrane. The catalysed reaction is 4 Fe(II)-[cytochrome c] + O2 + 8 H(+)(in) = 4 Fe(III)-[cytochrome c] + 2 H2O + 4 H(+)(out). Its function is as follows. Component of the cytochrome c oxidase, the last enzyme in the mitochondrial electron transport chain which drives oxidative phosphorylation. The respiratory chain contains 3 multisubunit complexes succinate dehydrogenase (complex II, CII), ubiquinol-cytochrome c oxidoreductase (cytochrome b-c1 complex, complex III, CIII) and cytochrome c oxidase (complex IV, CIV), that cooperate to transfer electrons derived from NADH and succinate to molecular oxygen, creating an electrochemical gradient over the inner membrane that drives transmembrane transport and the ATP synthase. Cytochrome c oxidase is the component of the respiratory chain that catalyzes the reduction of oxygen to water. Electrons originating from reduced cytochrome c in the intermembrane space (IMS) are transferred via the dinuclear copper A center (CU(A)) of subunit 2 and heme A of subunit 1 to the active site in subunit 1, a binuclear center (BNC) formed by heme A3 and copper B (CU(B)). The BNC reduces molecular oxygen to 2 water molecules using 4 electrons from cytochrome c in the IMS and 4 protons from the mitochondrial matrix. The polypeptide is Cytochrome c oxidase subunit 2 (MT-CO2) (Loxodonta africana (African elephant)).